Reading from the N-terminus, the 807-residue chain is Lysyl oxidase homolog 3B (807 aa).

A signal peptide spans 1–24 (MELHQWCRHIIVFLLNVWIPSCFA). SRCR domains follow at residues 49 to 150 (FRLS…VICK), 175 to 288 (VRLR…VSCV), 309 to 409 (TRLK…VRCN), 419 to 470 (VRIL…LGYA), and 476 to 579 (VRLS…VICS). 9 disulfide bridges follow: cysteine 75/cysteine 139, cysteine 88/cysteine 149, cysteine 119/cysteine 129, cysteine 207/cysteine 277, cysteine 220/cysteine 287, cysteine 254/cysteine 264, cysteine 334/cysteine 398, cysteine 347/cysteine 408, and cysteine 378/cysteine 388. Residue asparagine 272 is glycosylated (N-linked (GlcNAc...) asparagine). A glycan (N-linked (GlcNAc...) asparagine) is linked at asparagine 392. Intrachain disulfides connect cysteine 514-cysteine 578 and cysteine 547-cysteine 557. Asparagine 536 is a glycosylation site (N-linked (GlcNAc...) asparagine). Asparagine 679 carries N-linked (GlcNAc...) asparagine glycosylation. The segment at residues 688-724 (KASFCLEDTDCDEGVSKRYKCANFGEQGITVGCWDLY) is a cross-link (lysine tyrosylquinone (Lys-Tyr)). Tyrosine 724 is modified (2',4',5'-topaquinone).

This sequence belongs to the lysyl oxidase family. Cu cation is required as a cofactor. It depends on lysine tyrosylquinone residue as a cofactor. Post-translationally, the lysine tyrosylquinone cross-link (LTQ) is generated by condensation of the epsilon-amino group of a lysine with a topaquinone produced by oxidation of tyrosine.

The protein localises to the secreted. Its subcellular location is the extracellular space. The protein resides in the cytoplasm. It is found in the nucleus. It carries out the reaction L-lysyl-[protein] + O2 + H2O = (S)-2-amino-6-oxohexanoyl-[protein] + H2O2 + NH4(+). The enzyme catalyses N(6)-acetyl-L-lysyl-[protein] + O2 + H2O = acetamide + (S)-2-amino-6-oxohexanoyl-[protein] + H2O2. Its function is as follows. Protein-lysine 6-oxidase that mediates the oxidation of peptidyl lysine residues to allysine in target proteins. Catalyzes the post-translational oxidative deamination of peptidyl lysine residues in precursors of elastin and different types of collagens, a prerequisite in the formation of cross-links between collagens and elastin. Can mediate oxidation of lysine residues that are acetylated. Also able to catalyze deacetylation of lysine residues. Required for maturation of neural crest derived cartilage elements. This Danio rerio (Zebrafish) protein is Lysyl oxidase homolog 3B.